The following is a 143-amino-acid chain: Large ribosomal subunit protein uL16 (143 aa).

Belongs to the universal ribosomal protein uL16 family. Part of the 50S ribosomal subunit.

Functionally, binds 23S rRNA and is also seen to make contacts with the A and possibly P site tRNAs. In Caulobacter vibrioides (strain ATCC 19089 / CIP 103742 / CB 15) (Caulobacter crescentus), this protein is Large ribosomal subunit protein uL16.